The following is a 446-amino-acid chain: Nuclear distribution protein PAC1-1 (446 aa).

Positions 9–41 constitute a LisH domain; the sequence is QAEELHKSLIAYLSSINASQSVTTLREELQIGD. Residues 60-86 are a coiled coil; it reads ISVVRLQKRILDLESKIASLQAELDSA. WD repeat units follow at residues 112–153, 155–195, 199–239, 242–281, 284–344, 346–385, 390–430, and 432–446; these read SHRG…RTLK, HTRT…ANIR, GHDH…CVKT, TQGD…ARAS, GHEN…IKTL, GHNN…KLVK, AHEH…TGFR, and VIAT…RVFM.

This sequence belongs to the WD repeat LIS1/nudF family. As to quaternary structure, self-associates. Interacts with NDL1 and dynein.

The protein resides in the cytoplasm. Its subcellular location is the cytoskeleton. The protein localises to the spindle pole. Its function is as follows. Positively regulates the activity of the minus-end directed microtubule motor protein dynein. May enhance dynein-mediated microtubule sliding by targeting dynein to the microtubule plus end. Required for nuclear migration during vegetative growth as well as development. Required for retrograde early endosome (EE) transport from the hyphal tip. Required for localization of dynein to the mitotic spindle poles. Recruits additional proteins to the dynein complex at SPBs. The polypeptide is Nuclear distribution protein PAC1-1 (Uncinocarpus reesii (strain UAMH 1704)).